Here is a 479-residue protein sequence, read N- to C-terminus: MSIVVKNNIHWVGQRDWEVRDFHGTEYKTLRGSSYNSYLIREEKNVLIDTVDHKFSREFVQNLRNEIDLADIDYIVINHAEEDHAGALTELMAQIPDTPIYCTANAIDSINGHHHHPEWNFNVVKTGDTLDIGNGKQLIFVETPMLHWPDSMMTYLTGDAVLFSNDAFGQHYCDEHLFNDEVDQTELFEQCQRYYANILTPFSRLVTPKITEILGFNLPVDMIATSHGVVWRDNPTQIVELYLKWAADYQEDRITIFYDTMSNNTRMMADAIAQGIAETDPRVAVKIFNVARSDKNEILTNVFRSKGVLVGTSTMNNVMMPKIAGLVEEMTGLRFRNKRASAFGSHGWSGGAVDRLSTRLQDAGFEMSLSLKAKWRPDQDALELCREHGREIARQWALAPLPQSTVNTVVKEETSATTKSDLGPRMQCSVCQWIYDPAKGEPMQDVAPGTPWSEVPDNFLCPECSLGKDVFDELASEAK.

The zinc metallo-hydrolase stretch occupies residues 30-210; it reads LRGSSYNSYL…PFSRLVTPKI (181 aa). 6 residues coordinate Fe cation: histidine 79, glutamate 81, aspartate 83, histidine 147, aspartate 166, and histidine 227. One can recognise a Flavodoxin-like domain in the interval 254–393; it reads ITIFYDTMSN…LCREHGREIA (140 aa). FMN contacts are provided by residues 260–264 and 342–369; these read TMSNN and AFGS…EMSL. In terms of domain architecture, Rubredoxin-like spans 423 to 474; it reads GPRMQCSVCQWIYDPAKGEPMQDVAPGTPWSEVPDNFLCPECSLGKDVFDEL. Cysteine 428, cysteine 431, cysteine 461, and cysteine 464 together coordinate Fe cation.

In the N-terminal section; belongs to the zinc metallo-hydrolase group 3 family. As to quaternary structure, homotetramer. It depends on Fe cation as a cofactor. Requires FMN as cofactor.

It localises to the cytoplasm. It participates in nitrogen metabolism; nitric oxide reduction. Anaerobic nitric oxide reductase; uses NADH to detoxify nitric oxide (NO), protecting several 4Fe-4S NO-sensitive enzymes. Has at least 2 reductase partners, only one of which (NorW, flavorubredoxin reductase) has been identified. NO probably binds to the di-iron center; electrons enter from the NorW at rubredoxin and are transferred sequentially to the FMN center and the di-iron center. Also able to function as an aerobic oxygen reductase. The protein is Anaerobic nitric oxide reductase flavorubredoxin of Shigella sonnei (strain Ss046).